A 193-amino-acid polypeptide reads, in one-letter code: NADH-quinone oxidoreductase subunit B (193 aa).

The interval 1–25 is disordered; the sequence is MGLNDSSGTLVAPKPKGIIDPNTGR. [4Fe-4S] cluster contacts are provided by C72, C73, C137, and C167.

The protein belongs to the complex I 20 kDa subunit family. NDH-1 is composed of 14 different subunits. Subunits NuoB, C, D, E, F, and G constitute the peripheral sector of the complex. It depends on [4Fe-4S] cluster as a cofactor.

Its subcellular location is the cell inner membrane. It catalyses the reaction a quinone + NADH + 5 H(+)(in) = a quinol + NAD(+) + 4 H(+)(out). NDH-1 shuttles electrons from NADH, via FMN and iron-sulfur (Fe-S) centers, to quinones in the respiratory chain. Couples the redox reaction to proton translocation (for every two electrons transferred, four hydrogen ions are translocated across the cytoplasmic membrane), and thus conserves the redox energy in a proton gradient. The polypeptide is NADH-quinone oxidoreductase subunit B (Mesorhizobium japonicum (strain LMG 29417 / CECT 9101 / MAFF 303099) (Mesorhizobium loti (strain MAFF 303099))).